Here is a 123-residue protein sequence, read N- to C-terminus: MSRRTERVASLLQHELGAIFQLELPRTPIVTIVEVKVTVDLGIARVYISTIGTPEEQAAIMAHLQEQNKYIRKLLSQRIRHQFRRIPELEFYEDHLYEHARHIEQLLSQVRKAPVDDAETPLD.

The protein belongs to the RbfA family. Monomer. Binds 30S ribosomal subunits, but not 50S ribosomal subunits or 70S ribosomes.

The protein resides in the cytoplasm. Its function is as follows. One of several proteins that assist in the late maturation steps of the functional core of the 30S ribosomal subunit. Associates with free 30S ribosomal subunits (but not with 30S subunits that are part of 70S ribosomes or polysomes). Required for efficient processing of 16S rRNA. May interact with the 5'-terminal helix region of 16S rRNA. In Chlorobium chlorochromatii (strain CaD3), this protein is Ribosome-binding factor A.